The sequence spans 386 residues: Paralemmin-1 (386 aa).

Positions 4–115 form a coiled coil; it reads VEANTLQQER…TKENLAEAAA (112 aa). Disordered stretches follow at residues 21–40, 51–149, 240–290, and 321–378; these read RKRQ…DRRQ, ERWL…PMKA, EATA…TMIF, and DAES…AKKQ. Basic and acidic residues-rich tracts occupy residues 24-40 and 68-95; these read QTEI…DRRQ and AMKK…RELE. Positions 97-116 are enriched in low complexity; that stretch reads LENSSSVTSTKENLAEAAAP. Basic and acidic residues-rich tracts occupy residues 259–282, 322–334, and 365–377; these read PRRE…EPSR, AESK…KDHA, and EAKE…DAKK. 2 S-palmitoyl cysteine lipidation sites follow: Cys-380 and Cys-382. Cys-383 carries the cysteine methyl ester modification. Cys-383 carries the S-farnesyl cysteine lipid modification. A propeptide spans 384–386 (removed in mature form); sequence TVM.

This sequence belongs to the paralemmin family. In terms of assembly, interacts with dopamine receptor DRD3. In terms of processing, phosphorylated. Expressed in the lens (at protein level). Highly expressed in forebrain and cerebellum with lower expression in adrenal gland and heart. Expression weak or undetectable in other tissues.

The protein resides in the cell membrane. Its subcellular location is the cell projection. It is found in the filopodium membrane. The protein localises to the axon. It localises to the dendrite. The protein resides in the dendritic spine. Its subcellular location is the basolateral cell membrane. It is found in the apicolateral cell membrane. Functionally, involved in plasma membrane dynamics and cell process formation. Isoform 1 and isoform 2 are necessary for axonal and dendritic filopodia induction, for dendritic spine maturation and synapse formation in a palmitoylation-dependent manner. The protein is Paralemmin-1 (PALM) of Gallus gallus (Chicken).